The primary structure comprises 601 residues: Elongation factor 4 (601 aa).

The region spanning 6 to 188 (EHIRNFSIIA…EIVRKIPAPE (183 aa)) is the tr-type G domain. GTP-binding positions include 18–23 (DHGKST) and 135–138 (NKID).

This sequence belongs to the TRAFAC class translation factor GTPase superfamily. Classic translation factor GTPase family. LepA subfamily.

It is found in the cell inner membrane. The enzyme catalyses GTP + H2O = GDP + phosphate + H(+). Functionally, required for accurate and efficient protein synthesis under certain stress conditions. May act as a fidelity factor of the translation reaction, by catalyzing a one-codon backward translocation of tRNAs on improperly translocated ribosomes. Back-translocation proceeds from a post-translocation (POST) complex to a pre-translocation (PRE) complex, thus giving elongation factor G a second chance to translocate the tRNAs correctly. Binds to ribosomes in a GTP-dependent manner. This Hydrogenovibrio crunogenus (strain DSM 25203 / XCL-2) (Thiomicrospira crunogena) protein is Elongation factor 4.